Consider the following 485-residue polypeptide: Ribosomal protein uS12 methylthiotransferase RimO (485 aa).

The region spanning 14–124 (PKVGFISLGC…VMAHVRELLP (111 aa)) is the MTTase N-terminal domain. [4Fe-4S] cluster-binding residues include cysteine 23, cysteine 59, cysteine 88, cysteine 167, cysteine 171, and cysteine 174. Residues 153 to 389 (LTPRHYAYVK…MEVAQRISRE (237 aa)) enclose the Radical SAM core domain. One can recognise a TRAM domain in the interval 392-468 (AEKVGRVLDV…EYDLYGEVIH (77 aa)).

Belongs to the methylthiotransferase family. RimO subfamily. The cofactor is [4Fe-4S] cluster.

Its subcellular location is the cytoplasm. The catalysed reaction is L-aspartate(89)-[ribosomal protein uS12]-hydrogen + (sulfur carrier)-SH + AH2 + 2 S-adenosyl-L-methionine = 3-methylsulfanyl-L-aspartate(89)-[ribosomal protein uS12]-hydrogen + (sulfur carrier)-H + 5'-deoxyadenosine + L-methionine + A + S-adenosyl-L-homocysteine + 2 H(+). Catalyzes the methylthiolation of an aspartic acid residue of ribosomal protein uS12. The chain is Ribosomal protein uS12 methylthiotransferase RimO from Deinococcus geothermalis (strain DSM 11300 / CIP 105573 / AG-3a).